The sequence spans 160 residues: MSDRVYLTKDGYNRLRDELTVLKSDVRKEVLEKIAEARAHGDLSENAEYDAAREQQRQLENKIGDLESKLTRATILDPKQVKTDRVYILTSVKLKNLDAQKEEIIEYTLVSSDEADTDLGKISVRSPVGKSLLGKAVGDKVQIQVPKGELHYEILEIFVK.

A coiled-coil region spans residues 43–76 (LSENAEYDAAREQQRQLENKIGDLESKLTRATIL).

This sequence belongs to the GreA/GreB family.

Its function is as follows. Necessary for efficient RNA polymerase transcription elongation past template-encoded arresting sites. The arresting sites in DNA have the property of trapping a certain fraction of elongating RNA polymerases that pass through, resulting in locked ternary complexes. Cleavage of the nascent transcript by cleavage factors such as GreA or GreB allows the resumption of elongation from the new 3'terminus. GreA releases sequences of 2 to 3 nucleotides. The sequence is that of Transcription elongation factor GreA from Chlorobium phaeobacteroides (strain BS1).